The chain runs to 95 residues: Co-chaperonin GroES (95 aa).

It belongs to the GroES chaperonin family. In terms of assembly, heptamer of 7 subunits arranged in a ring. Interacts with the chaperonin GroEL.

The protein localises to the cytoplasm. Functionally, together with the chaperonin GroEL, plays an essential role in assisting protein folding. The GroEL-GroES system forms a nano-cage that allows encapsulation of the non-native substrate proteins and provides a physical environment optimized to promote and accelerate protein folding. GroES binds to the apical surface of the GroEL ring, thereby capping the opening of the GroEL channel. This is Co-chaperonin GroES from Desulfatibacillum aliphaticivorans.